A 293-amino-acid chain; its full sequence is uncharacterized protein (293 aa).

Disordered stretches follow at residues 1-95 (MFLR…KDKA) and 268-293 (EETADWESEGQGKEAKEQTEGPGRAL). Phosphoserine is present on residues S34, S35, and S89. Basic and acidic residues-rich tracts occupy residues 85–95 (KRMDSLKKDKA) and 277–286 (GQGKEAKEQT).

This is an uncharacterized protein from Rattus norvegicus (Rat).